A 766-amino-acid chain; its full sequence is Pentatricopeptide repeat-containing protein At3g61520, mitochondrial (766 aa).

A mitochondrion-targeting transit peptide spans 1 to 30 (MSIMLSISRRRNSYILLNHSRFLRRFSYDV). 16 PPR repeats span residues 151–181 (TVVA…LDSN), 184–218 (NSQV…ESVF), 221–257 (NRIT…GVSP), 258–292 (NSVW…KTPL), 293–327 (EAPP…KIRP), 328–358 (DVVT…MRGK), 369–404 (DSIH…RCAP), 405–439 (NAVT…EIKP), 440–474 (NVVT…GVKG), 475–509 (NVVT…GCSP), 510–544 (DAKI…GFSL), 545–579 (DLLA…GKKP), 580–614 (DSIT…GLDP), 615–650 (TVTT…KVNP), 651–685 (NTVI…MVRP), and 686–720 (NVET…SCEP).

Belongs to the PPR family. P subfamily.

The protein localises to the mitochondrion. This chain is Pentatricopeptide repeat-containing protein At3g61520, mitochondrial, found in Arabidopsis thaliana (Mouse-ear cress).